A 239-amino-acid chain; its full sequence is LRRN4 C-terminal-like protein (239 aa).

The first 19 residues, 1-19 (MLGSLSLLWLAAMTTSLVS), serve as a signal peptide directing secretion. Residues 20–194 (QPQILTLEDY…KFIMPPKPVT (175 aa)) are Extracellular-facing. One can recognise a Fibronectin type-III domain in the interval 82 to 179 (QPEPPRLGEV…EGPENWTGPS (98 aa)). N-linked (GlcNAc...) asparagine glycosylation is found at N132 and N174. Residues 195-215 (LVYAAVGVGTALALLSCAALV) form a helical membrane-spanning segment. Topologically, residues 216-239 (WHFCLRERWGCPRRQGMAQASEAL) are cytoplasmic.

The protein resides in the membrane. The protein is LRRN4 C-terminal-like protein (Lrrn4cl) of Mus musculus (Mouse).